The following is a 426-amino-acid chain: Serine--tRNA ligase (426 aa).

Residue 231–233 (TAE) coordinates L-serine. 262–264 (RSE) contributes to the ATP binding site. E285 provides a ligand contact to L-serine. An ATP-binding site is contributed by 349–352 (EISS). S385 is an L-serine binding site.

It belongs to the class-II aminoacyl-tRNA synthetase family. Type-1 seryl-tRNA synthetase subfamily. Homodimer. The tRNA molecule binds across the dimer.

The protein resides in the cytoplasm. It carries out the reaction tRNA(Ser) + L-serine + ATP = L-seryl-tRNA(Ser) + AMP + diphosphate + H(+). The catalysed reaction is tRNA(Sec) + L-serine + ATP = L-seryl-tRNA(Sec) + AMP + diphosphate + H(+). It functions in the pathway aminoacyl-tRNA biosynthesis; selenocysteinyl-tRNA(Sec) biosynthesis; L-seryl-tRNA(Sec) from L-serine and tRNA(Sec): step 1/1. Its function is as follows. Catalyzes the attachment of serine to tRNA(Ser). Is also able to aminoacylate tRNA(Sec) with serine, to form the misacylated tRNA L-seryl-tRNA(Sec), which will be further converted into selenocysteinyl-tRNA(Sec). This chain is Serine--tRNA ligase, found in Saccharophagus degradans (strain 2-40 / ATCC 43961 / DSM 17024).